A 629-amino-acid chain; its full sequence is Embryonic polyadenylate-binding protein B (629 aa).

RRM domains follow at residues 11-89, 99-175, 191-268, and 294-370; these read ASLY…WSQR, GNVF…HFKS, TNVY…RAQK, and VNLY…LAQR. The PABC domain maps to 539–616; it reads QEPLTASLLA…AVAVLQAHQA (78 aa).

Belongs to the polyadenylate-binding protein type-1 family. In terms of assembly, interacts with dazl in an RNA-independent manner. The C-terminus can self-associate and also interact with the C-terminus of pabpc1, independently of RNA. RRM 1 and RRM 2 interact with both eif4g1 and paip1, and the C-terminus also interacts with paip1. Prior to oocyte maturation, found in a complex with dazl and pum2 proteins and spdy1 mRNA; pum2 dissociates from the complex during maturation. Interacts with the translation termination factor sup35/erf3.

The protein resides in the cytoplasm. Binds and protects the poly(A) tail of mRNA with or without an AU-rich element (ARE) and prevents mRNA deadenylation. Stimulates the translation of mRNAs to which it is bound during early development. This is Embryonic polyadenylate-binding protein B (epabp-b) from Xenopus laevis (African clawed frog).